Consider the following 315-residue polypeptide: Mitochondrial glutamate carrier 2 (315 aa).

3 Solcar repeats span residues 6-92 (LSIT…FRRL), 100-210 (RNLK…LNNL), and 219-308 (ASFA…GIGE). Helical transmembrane passes span 12–32 (LING…IDLA), 61–81 (FFGM…EKAI), and 106–126 (MLAG…MEML). Residues 141–160 (QGSASAPSTSRSYTTGSAST) are disordered. Residues 142 to 159 (GSASAPSTSRSYTTGSAS) are compositionally biased toward polar residues. The residue at position 145 (Ser-145) is a Phosphoserine. 3 consecutive transmembrane segments (helical) span residues 185 to 205 (GLGA…PLFA), 225 to 245 (FVSG…LDVL), and 288 to 308 (ALVI…GIGE).

The protein belongs to the mitochondrial carrier (TC 2.A.29) family. Expressed in brain, to a lesser extent in testis, and poorly in all the other tissues.

The protein resides in the mitochondrion inner membrane. The catalysed reaction is L-glutamate(in) + H(+)(in) = L-glutamate(out) + H(+)(out). In terms of biological role, responsible for the transport of glutamate from the cytosol into the mitochondrial matrix with the concomitant import of a proton (symport system). This chain is Mitochondrial glutamate carrier 2, found in Homo sapiens (Human).